A 262-amino-acid chain; its full sequence is Acyl-[acyl-carrier-protein]--UDP-N-acetylglucosamine O-acyltransferase (262 aa).

This sequence belongs to the transferase hexapeptide repeat family. LpxA subfamily. In terms of assembly, homotrimer.

The protein localises to the cytoplasm. It catalyses the reaction a (3R)-hydroxyacyl-[ACP] + UDP-N-acetyl-alpha-D-glucosamine = a UDP-3-O-[(3R)-3-hydroxyacyl]-N-acetyl-alpha-D-glucosamine + holo-[ACP]. It functions in the pathway glycolipid biosynthesis; lipid IV(A) biosynthesis; lipid IV(A) from (3R)-3-hydroxytetradecanoyl-[acyl-carrier-protein] and UDP-N-acetyl-alpha-D-glucosamine: step 1/6. Involved in the biosynthesis of lipid A, a phosphorylated glycolipid that anchors the lipopolysaccharide to the outer membrane of the cell. This is Acyl-[acyl-carrier-protein]--UDP-N-acetylglucosamine O-acyltransferase from Salmonella arizonae (strain ATCC BAA-731 / CDC346-86 / RSK2980).